We begin with the raw amino-acid sequence, 217 residues long: 3,4-dihydroxy-2-butanone 4-phosphate synthase (217 aa).

Residues 37–38, Asp42, 150–154, and Glu174 each bind D-ribulose 5-phosphate; these read RE and RRGHT. Glu38 provides a ligand contact to Mg(2+). His153 serves as a coordination point for Mg(2+).

It belongs to the DHBP synthase family. In terms of assembly, homodimer. Requires Mg(2+) as cofactor. It depends on Mn(2+) as a cofactor.

It carries out the reaction D-ribulose 5-phosphate = (2S)-2-hydroxy-3-oxobutyl phosphate + formate + H(+). It participates in cofactor biosynthesis; riboflavin biosynthesis; 2-hydroxy-3-oxobutyl phosphate from D-ribulose 5-phosphate: step 1/1. Catalyzes the conversion of D-ribulose 5-phosphate to formate and 3,4-dihydroxy-2-butanone 4-phosphate. This is 3,4-dihydroxy-2-butanone 4-phosphate synthase from Tolumonas auensis (strain DSM 9187 / NBRC 110442 / TA 4).